A 1123-amino-acid chain; its full sequence is RNA-binding protein 6 (1123 aa).

Disordered stretches follow at residues 1–391 (MWGD…EGGL) and 413–454 (LPGS…EEKP). At Ser-17 the chain carries Phosphoserine. Lys-36 participates in a covalent cross-link: Glycyl lysine isopeptide (Lys-Gly) (interchain with G-Cter in SUMO2). Basic and acidic residues predominate over residues 79–97 (DGPHGDYRGGEGPGHDFRG). Residues 98–114 (GDFSSSDFQSRDSSQLD) are compositionally biased toward low complexity. Composition is skewed to basic and acidic residues over residues 115–131 (FRGRDIHSGDFRDREGP) and 145–237 (YRGR…DFRG). Phosphoserine is present on Ser-240. 2 stretches are compositionally biased toward basic and acidic residues: residues 245-286 (LDFR…REMP) and 301-323 (QDREHSGMNVNRREESTHDHTIE). Residue Lys-331 forms a Glycyl lysine isopeptide (Lys-Gly) (interchain with G-Cter in SUMO2) linkage. Residues 332–354 (GEFEHSETREGETQGVAFEHESP) are compositionally biased toward basic and acidic residues. Position 344 is a phosphothreonine (Thr-344). Positions 356–365 (DFQNSQSPVQ) are enriched in polar residues. Ser-360 and Ser-362 each carry phosphoserine. 2 stretches are compositionally biased toward basic and acidic residues: residues 366 to 391 (DQDKSQLSGREEQSSDAGLFKEEGGL) and 431 to 454 (KTARDAQRDLQDQDYRTGPSEEKP). Glycyl lysine isopeptide (Lys-Gly) (interchain with G-Cter in SUMO2) cross-links involve residues Lys-386, Lys-453, Lys-469, and Lys-569. Positions 456 to 536 (RLIRLSGVPE…KEVTLEYVSS (81 aa)) constitute an RRM domain. Disordered stretches follow at residues 574 to 654 (TYPQ…QDGE), 741 to 787 (KRRN…QSSS), and 827 to 948 (EEEI…EEDK). Composition is skewed to basic and acidic residues over residues 597 to 654 (PADK…QDGE) and 742 to 754 (RRNDSGDHSDHMH). Over residues 772 to 787 (SDWSSDTNRQGQQSSS) the composition is skewed to polar residues. The span at 843–860 (SKKEMSKRDGKEKKDRGV) shows a compositional bias: basic and acidic residues. Residues Lys-871, Lys-879, and Lys-887 each participate in a glycyl lysine isopeptide (Lys-Gly) (interchain with G-Cter in SUMO2) cross-link. Position 891 is a phosphoserine (Ser-891). The segment covering 910 to 922 (GDSDYEEEEEEEQ) has biased composition (acidic residues). Basic and acidic residues predominate over residues 934-948 (QKREEQTKKENEEDK). Glycyl lysine isopeptide (Lys-Gly) (interchain with G-Cter in SUMO2) cross-links involve residues Lys-935, Lys-948, Lys-991, and Lys-1019. Basic and acidic residues predominate over residues 1004–1051 (EREGKFKGRGNDRREKLQSFDSPERKRIKYSRETDSDRKLVDKEDIDT). Positions 1004–1106 (EREGKFKGRG…RTSKRQSNET (103 aa)) are disordered. Phosphoserine is present on residues Ser-1022 and Ser-1025. Glycyl lysine isopeptide (Lys-Gly) (interchain with G-Cter in SUMO2) cross-links involve residues Lys-1042, Lys-1046, and Lys-1066. A G-patch domain is found at 1051–1097 (TSSKGGCVQQATGWRKGTGLGYGHPGLASSEEAEGRMRGPSVGASGR).

May interact with FAM168B. In terms of tissue distribution, ubiquitous in adults.

It localises to the nucleus. Functionally, specifically binds poly(G) RNA homopolymers in vitro. This Homo sapiens (Human) protein is RNA-binding protein 6 (RBM6).